The sequence spans 383 residues: S-adenosylmethionine synthase (383 aa).

Histidine 15 is a binding site for ATP. Mg(2+) is bound at residue aspartate 17. Residue glutamate 43 participates in K(+) binding. L-methionine is bound by residues glutamate 56 and glutamine 99. Residues 99–109 (QSPDINQGVDR) are flexible loop. Residues 164–166 (DAK), 230–231 (RF), aspartate 239, 245–246 (RK), alanine 262, and lysine 266 contribute to the ATP site. Aspartate 239 is a binding site for L-methionine. Residue lysine 270 coordinates L-methionine.

The protein belongs to the AdoMet synthase family. In terms of assembly, homotetramer; dimer of dimers. Mg(2+) serves as cofactor. Requires K(+) as cofactor.

The protein resides in the cytoplasm. The catalysed reaction is L-methionine + ATP + H2O = S-adenosyl-L-methionine + phosphate + diphosphate. It functions in the pathway amino-acid biosynthesis; S-adenosyl-L-methionine biosynthesis; S-adenosyl-L-methionine from L-methionine: step 1/1. In terms of biological role, catalyzes the formation of S-adenosylmethionine (AdoMet) from methionine and ATP. The overall synthetic reaction is composed of two sequential steps, AdoMet formation and the subsequent tripolyphosphate hydrolysis which occurs prior to release of AdoMet from the enzyme. In Pectobacterium carotovorum subsp. carotovorum (strain PC1), this protein is S-adenosylmethionine synthase.